The chain runs to 424 residues: Tyrosine--tRNA ligase (424 aa).

Residue Tyr37 coordinates L-tyrosine. The 'HIGH' region motif lies at 42–51 (PTADSLHLGH). L-tyrosine contacts are provided by Tyr175 and Gln179. Residues 235 to 239 (KFGKT) carry the 'KMSKS' region motif. An ATP-binding site is contributed by Lys238. Positions 357 to 414 (ADLQQALVNAELVPSRGQARTMISSNAVAINGEKQSDPEYAFTDADRLFGRYTLLRRG) constitute an S4 RNA-binding domain.

The protein belongs to the class-I aminoacyl-tRNA synthetase family. TyrS type 1 subfamily. As to quaternary structure, homodimer.

The protein resides in the cytoplasm. The catalysed reaction is tRNA(Tyr) + L-tyrosine + ATP = L-tyrosyl-tRNA(Tyr) + AMP + diphosphate + H(+). Catalyzes the attachment of tyrosine to tRNA(Tyr) in a two-step reaction: tyrosine is first activated by ATP to form Tyr-AMP and then transferred to the acceptor end of tRNA(Tyr). The sequence is that of Tyrosine--tRNA ligase from Yersinia enterocolitica serotype O:8 / biotype 1B (strain NCTC 13174 / 8081).